A 124-amino-acid polypeptide reads, in one-letter code: Small ribosomal subunit protein uS12 (124 aa).

The tract at residues 1–29 (MPTINQLVRRPRRPRESANKAPALQHNPQ) is disordered. The residue at position 90 (Asp90) is a 3-methylthioaspartic acid.

Belongs to the universal ribosomal protein uS12 family. As to quaternary structure, part of the 30S ribosomal subunit. Contacts proteins S8 and S17. May interact with IF1 in the 30S initiation complex.

In terms of biological role, with S4 and S5 plays an important role in translational accuracy. Functionally, interacts with and stabilizes bases of the 16S rRNA that are involved in tRNA selection in the A site and with the mRNA backbone. Located at the interface of the 30S and 50S subunits, it traverses the body of the 30S subunit contacting proteins on the other side and probably holding the rRNA structure together. The combined cluster of proteins S8, S12 and S17 appears to hold together the shoulder and platform of the 30S subunit. The sequence is that of Small ribosomal subunit protein uS12 from Anaplasma marginale (strain Florida).